Reading from the N-terminus, the 711-residue chain is Ribosomal RNA large subunit methyltransferase K/L (711 aa).

Positions 43 to 154 (TLYRTLLWSR…RENLVISLDL (112 aa)) constitute a THUMP domain.

Belongs to the methyltransferase superfamily. RlmKL family.

The protein resides in the cytoplasm. It carries out the reaction guanosine(2445) in 23S rRNA + S-adenosyl-L-methionine = N(2)-methylguanosine(2445) in 23S rRNA + S-adenosyl-L-homocysteine + H(+). The enzyme catalyses guanosine(2069) in 23S rRNA + S-adenosyl-L-methionine = N(2)-methylguanosine(2069) in 23S rRNA + S-adenosyl-L-homocysteine + H(+). Specifically methylates the guanine in position 2445 (m2G2445) and the guanine in position 2069 (m7G2069) of 23S rRNA. The protein is Ribosomal RNA large subunit methyltransferase K/L of Haemophilus influenzae (strain PittEE).